A 418-amino-acid chain; its full sequence is Maltoporin (418 aa).

The signal sequence occupies residues 1–26 (MLPMNRNTLGLAVTIATVFVSSTVTA).

The protein belongs to the porin LamB (TC 1.B.3) family. As to quaternary structure, homotrimer formed of three 18-stranded antiparallel beta-barrels, containing three independent channels.

The protein localises to the cell outer membrane. It carries out the reaction beta-maltose(in) = beta-maltose(out). Functionally, involved in the transport of maltose and maltodextrins. In Photobacterium profundum (strain SS9), this protein is Maltoporin.